A 258-amino-acid polypeptide reads, in one-letter code: Regulatory protein RecX (258 aa).

It belongs to the RecX family.

It localises to the cytoplasm. Its function is as follows. Modulates RecA activity. The protein is Regulatory protein RecX of Streptococcus thermophilus (strain ATCC BAA-491 / LMD-9).